We begin with the raw amino-acid sequence, 99 residues long: Large ribosomal subunit protein bL21 (99 aa).

It belongs to the bacterial ribosomal protein bL21 family. Part of the 50S ribosomal subunit. Contacts protein L20.

Functionally, this protein binds to 23S rRNA in the presence of protein L20. The chain is Large ribosomal subunit protein bL21 from Mycoplasma mobile (strain ATCC 43663 / 163K / NCTC 11711) (Mesomycoplasma mobile).